The primary structure comprises 440 residues: Transposon Ty1-DR1 Gag polyprotein (440 aa).

Composition is skewed to polar residues over residues 1–10 (MESQQLSNYP), 48–60 (TKAN…TPAS), and 127–152 (QSQF…GNTF). Disordered stretches follow at residues 1–93 (MESQ…MMTQ), 126–173 (PQSQ…RPPP), and 352–440 (GSRN…PGTY). The span at 153 to 165 (TDSSSADSDMTST) shows a compositional bias: low complexity. The RNA-binding stretch occupies residues 299-401 (NNGIHINNKV…NSKSKTARAH (103 aa)). The segment covering 402-418 (NVSTSNNSPSTDNDSIS) has biased composition (low complexity). S416 is subject to Phosphoserine. Residues 419–428 (KSTTEPIQLN) show a composition bias toward polar residues. Residues 429-440 (NKHDLHLRPGTY) are compositionally biased toward basic and acidic residues.

Homotrimer.

It localises to the cytoplasm. In terms of biological role, capsid protein (CA) is the structural component of the virus-like particle (VLP), forming the shell that encapsulates the retrotransposons dimeric RNA genome. The particles are assembled from trimer-clustered units and there are holes in the capsid shells that allow for the diffusion of macromolecules. CA also has nucleocapsid-like chaperone activity, promoting primer tRNA(i)-Met annealing to the multipartite primer-binding site (PBS), dimerization of Ty1 RNA and initiation of reverse transcription. The protein is Transposon Ty1-DR1 Gag polyprotein (TY1A-DR1) of Saccharomyces cerevisiae (strain ATCC 204508 / S288c) (Baker's yeast).